The following is a 188-amino-acid chain: MSIKSDKWIRRMAAEYNMIEPFEPNQIKQRNGESIVSYGTSSYGYDIRCSDEFKLFTNLNSTIVDPKRFDSNSFVDVKGDICIIPPNSFALARTVEYFRIPRNVLTICLGKSTYARCGIIVNVTPFEPEWEGYVTLEFSNTTPLPAKIYANEGVAQVIFFESDEVCETSYKDRNGKYQFQQGVTLPKI.

DCTP is bound by residues lysine 111–arginine 116, threonine 135–glutamate 137, glutamine 156, tyrosine 170, and glutamine 180. Glutamate 137 serves as the catalytic Proton donor/acceptor.

Belongs to the dCTP deaminase family. As to quaternary structure, homotrimer.

It carries out the reaction dCTP + H2O + H(+) = dUTP + NH4(+). It functions in the pathway pyrimidine metabolism; dUMP biosynthesis; dUMP from dCTP (dUTP route): step 1/2. In terms of biological role, catalyzes the deamination of dCTP to dUTP. This is dCTP deaminase from Nitrosomonas europaea (strain ATCC 19718 / CIP 103999 / KCTC 2705 / NBRC 14298).